A 239-amino-acid chain; its full sequence is Transcriptional regulatory protein DcuR (239 aa).

The region spanning 3–121 (NVLIIDDDAM…RFEEALTGWR (119 aa)) is the Response regulatory domain. Asp56 bears the 4-aspartylphosphate mark. Positions 181–200 (TDELANEVNISRVSCRKYLI) form a DNA-binding region, H-T-H motif.

Phosphorylated and activated by DcuS.

It is found in the cytoplasm. Its function is as follows. Member of the two-component regulatory system DcuR/DcuS. Involved in the C4-dicarboxylate-stimulated regulation of the genes encoding the anaerobic fumarate respiratory system (frdABCD; nuoAN; dcuB; dcuC; sdhCDAB; etc.). Weakly regulates the aerobic C4-dicarboxylate transporter dctA. This is Transcriptional regulatory protein DcuR (dcuR) from Escherichia coli O157:H7.